The chain runs to 119 residues: Large ribosomal subunit protein bL20c (119 aa).

Belongs to the bacterial ribosomal protein bL20 family.

The protein resides in the plastid. It localises to the chloroplast. Binds directly to 23S ribosomal RNA and is necessary for the in vitro assembly process of the 50S ribosomal subunit. It is not involved in the protein synthesizing functions of that subunit. The sequence is that of Large ribosomal subunit protein bL20c from Triticum aestivum (Wheat).